The following is a 77-amino-acid chain: Conotoxin Cl6.15 (77 aa).

The signal sequence occupies residues 1 to 19 (MKLSVKFLLFLMILPLIAG). Residues 20-37 (EDMSDNDAPKSVDVQRNV) constitute a propeptide that is removed on maturation. 3 disulfides stabilise this stretch: cysteine 49-cysteine 61, cysteine 55-cysteine 66, and cysteine 60-cysteine 75.

The protein belongs to the conotoxin I1 superfamily. In terms of tissue distribution, expressed by the venom duct.

The protein localises to the secreted. This Californiconus californicus (California cone) protein is Conotoxin Cl6.15.